A 393-amino-acid chain; its full sequence is Branched-chain-amino-acid aminotransferase, mitochondrial (393 aa).

The transit peptide at 1–27 (MATAALRQIWIPRFLPVPWFLCGSRRY) directs the protein to the mitochondrion. Y169 is a binding site for substrate. K230 bears the N6-(pyridoxal phosphate)lysine mark. K322 carries the post-translational modification N6-acetyllysine.

It belongs to the class-IV pyridoxal-phosphate-dependent aminotransferase family. In terms of assembly, homodimer. Pyridoxal 5'-phosphate serves as cofactor.

It is found in the mitochondrion. It catalyses the reaction L-leucine + 2-oxoglutarate = 4-methyl-2-oxopentanoate + L-glutamate. It carries out the reaction L-isoleucine + 2-oxoglutarate = (S)-3-methyl-2-oxopentanoate + L-glutamate. The enzyme catalyses L-valine + 2-oxoglutarate = 3-methyl-2-oxobutanoate + L-glutamate. Functionally, catalyzes the first reaction in the catabolism of the essential branched chain amino acids leucine, isoleucine, and valine. May also function as a transporter of branched chain alpha-keto acids. The sequence is that of Branched-chain-amino-acid aminotransferase, mitochondrial (BCAT2) from Bos taurus (Bovine).